A 1043-amino-acid chain; its full sequence is F-box DNA helicase 1 (1043 aa).

The disordered stretch occupies residues 30 to 56 (QRWTNRDPNHGLYPKPRTKRGSRGQGS). The short motif at 57–64 (QRCIPEFF) is the PIP-box element. Residues 101-191 (CALPQEGSAG…QDAGDVGPDP (91 aa)) form a disordered region. The residue at position 124 (Ser124) is a Phosphoserine. An F-box domain is found at 138–184 (SRWDGVSKKAPRHHLSVPCTRPREARQEAEDSTSRLSAESGETDQDA). A compositionally biased stretch (basic and acidic residues) spans 158 to 170 (RPREARQEAEDST). Residues 442–705 (THEQQLILNH…FYLTQSFRFG (264 aa)) enclose the UvrD-like helicase ATP-binding domain. Residue 463–470 (AFAGTGKT) coordinates ATP. An APIM motif motif is present at residues 807 to 811 (KFIRR).

The protein belongs to the helicase family. UvrD subfamily. Part of the SCF (SKP1-CUL1-F-box) E3 ubiquitin-protein ligase complex SCF(FBH1) composed of CUL1, SKP1, RBX1 and FBH1. Interacts with RAD51. Interacts with RPA2. Interacts (via PIP-box and RanBP2-type zinc finger) with PCNA. Ubiquitinated. Ubiquitination by the DCX(DTL) complex, also named CRL4(CDT2), leading to its degradation: ubiquitination takes place after its localization to DNA damage sites, possibly to facilitate the translesion synthesis (TLS) pathway.

It is found in the nucleus. Its subcellular location is the chromosome. The catalysed reaction is Couples ATP hydrolysis with the unwinding of duplex DNA by translocating in the 3'-5' direction.. It carries out the reaction ATP + H2O = ADP + phosphate + H(+). The protein operates within protein modification; protein ubiquitination. Its function is as follows. 3'-5' DNA helicase and substrate-recognition component of the SCF(FBH1) E3 ubiquitin ligase complex that plays a key role in response to stalled/damaged replication forks. Involved in genome maintenance by acting as an anti-recombinogenic helicase and preventing extensive strand exchange during homologous recombination: promotes RAD51 filament dissolution from stalled forks, thereby inhibiting homologous recombination and preventing excessive recombination. Also promotes cell death and DNA double-strand breakage in response to replication stress: together with MUS81, promotes the endonucleolytic DNA cleavage following prolonged replication stress via its helicase activity, possibly to eliminate cells with excessive replication stress. Plays a major role in remodeling of stalled DNA forks by catalyzing fork regression, in which the fork reverses and the two nascent DNA strands anneal. In addition to the helicase activity, also acts as the substrate-recognition component of the SCF(FBH1) E3 ubiquitin ligase complex, a complex that mediates ubiquitination of RAD51, leading to regulate RAD51 subcellular location. The protein is F-box DNA helicase 1 of Homo sapiens (Human).